The following is a 1232-amino-acid chain: Pyruvate:ferredoxin oxidoreductase (1232 aa).

Position 31 (T31) interacts with pyruvate. E64 provides a ligand contact to thiamine diphosphate. R114 serves as a coordination point for pyruvate. Residues 427–431, K459, N560, and N602 each bind CoA; that span reads ADGTV. 4Fe-4S ferredoxin-type domains are found at residues 680–709 and 736–767; these read NVPQ…PVLA and FRIQ…MQPL. [4Fe-4S] cluster is bound by residues C689, C692, C695, C699, C745, C748, C751, C755, C812, and C815. Thiamine diphosphate is bound by residues E817, C840, and 962–965; that span reads GDGW. C840 lines the [4Fe-4S] cluster pocket. D963 contacts Mg(2+). Ca(2+) is bound by residues D983 and N985. Residues T991 and V993 each coordinate Mg(2+). 991–996 is a thiamine diphosphate binding site; that stretch reads TEVYSN. 4 residues coordinate Ca(2+): A1056, F1059, G1061, and S1063. C1071 contributes to the [4Fe-4S] cluster binding site. A disulfide bridge links C1195 with C1212. The disordered stretch occupies residues 1197–1232; the sequence is RDDTPMMARPDSGEACDQNRAGTSEQQGDLSKRTKK. The segment covering 1216–1225 has biased composition (polar residues); the sequence is RAGTSEQQGD.

The protein belongs to the pyruvate:ferredoxin/flavodoxin oxidoreductase family. Homodimer. The cofactor is [4Fe-4S] cluster. Thiamine diphosphate is required as a cofactor. Mg(2+) serves as cofactor.

It localises to the cytoplasm. It catalyses the reaction 2 oxidized [2Fe-2S]-[ferredoxin] + pyruvate + CoA = 2 reduced [2Fe-2S]-[ferredoxin] + acetyl-CoA + CO2 + H(+). Its function is as follows. Catalyzes the ferredoxin-dependent oxidative decarboxylation of pyruvate. Required for the transfer of electrons from pyruvate to ferredoxin. Ferredoxin I and ferredoxin II, which are single 4Fe-4S cluster ferredoxins are the most effective electron carriers of POR. The sequence is that of Pyruvate:ferredoxin oxidoreductase from Desulfocurvibacter africanus (Desulfovibrio africanus).